The chain runs to 327 residues: Cyclic AMP-responsive element-binding protein 1 (327 aa).

2 disordered regions span residues 1–29 (MTMD…TVQA) and 94–113 (SEDS…RREI). Residues 8–146 (DNQQSGDAAV…IEEEKSEEET (139 aa)) enclose the KID domain. Over residues 20 to 29 (AESQQMTVQA) the composition is skewed to polar residues. Ser119 carries the phosphoserine; by CaMK1, CaMK2, CaMK4, PKB/AKT1 or PKB/AKT2, RPS6KA3, RPS6KA4, RPS6KA5 and SGK1 modification. A Glycyl lysine isopeptide (Lys-Gly) (interchain with G-Cter in SUMO2) cross-link involves residue Lys122. The interval 126-149 (DLSSDAPGVPRIEEEKSEEETSAP) is disordered. Ser128 is modified (phosphoserine; by CaMK2). Ser257 carries the phosphoserine; by HIPK2 modification. The 59-residue stretch at 269–327 (ARKREVRLMKNREAARECRRKKKEYVKCLENRVAVLENQNKTLIEELKALKDLYCHKSD) folds into the bZIP domain. The tract at residues 270–295 (RKREVRLMKNREAARECRRKKKEYVK) is basic motif. Residues Lys271 and Lys290 each participate in a glycyl lysine isopeptide (Lys-Gly) (interchain with G-Cter in SUMO1) cross-link. Residues 297 to 318 (LENRVAVLENQNKTLIEELKAL) are leucine-zipper.

It belongs to the bZIP family. As to quaternary structure, interacts with PPRC1. Binds DNA as a dimer. This dimer is stabilized by magnesium ions. Interacts, through the bZIP domain, with the coactivators CRTC1/TORC1, CRTC2/TORC2 and CRTC3/TORC3. When phosphorylated on Ser-119, binds CREBBP. Interacts with CREBL2; regulates CREB1 phosphorylation, stability and transcriptional activity. Interacts (phosphorylated form) with TOX3. Interacts with ARRB1. Binds to HIPK2. Interacts with SGK1. Interacts with TSSK4; this interaction facilitates phosphorylation on Ser-119. Forms a complex with KMT2A and CREBBP. Interacts with TOX4; CREB1 is required for full induction of TOX4-dependent activity and the interaction is increased by cAMP and inhibited by insulin. In terms of processing, phosphorylation of Ser-119 allows CREBBP binding. Stimulated by phosphorylation. Phosphorylation of both Ser-128 and Ser-119 in the SCN regulates the activity of CREB and participate in circadian rhythm generation. Phosphorylated upon calcium influx by CaMK4 and CaMK2 on Ser-119. CaMK4 is much more potent than CaMK2 in activating CREB. Phosphorylated by CaMK2 on Ser-128. Phosphorylation of Ser-128 blocks CREB-mediated transcription even when Ser-119 is phosphorylated. Phosphorylated by CaMK1. Phosphorylation of Ser-257 by HIPK2 in response to genotoxic stress promotes CREB1 activity, facilitating the recruitment of the coactivator CBP. Phosphorylated at Ser-119 by RPS6KA3, RPS6KA4 and RPS6KA5 in response to mitogenic or stress stimuli. CREBL2 positively regulates phosphorylation at Ser-119 thereby stimulating CREB1 transcriptional activity. In liver, phosphorylation is induced by fasting or glucagon in a circadian fashion. Phosphorylated by TSSK4 on Ser-119. Post-translationally, sumoylated with SUMO1. Sumoylation on Lys-290, but not on Lys-271, is required for nuclear localization of this protein. Sumoylation is enhanced under hypoxia, promoting nuclear localization and stabilization.

The protein resides in the nucleus. Phosphorylation-dependent transcription factor that stimulates transcription upon binding to the DNA cAMP response element (CRE), a sequence present in many viral and cellular promoters. Transcription activation is enhanced by the TORC coactivators which act independently of Ser-119 phosphorylation. Involved in different cellular processes including the synchronization of circadian rhythmicity and the differentiation of adipose cells. Regulates the expression of apoptotic and inflammatory response factors in cardiomyocytes in response to ERFE-mediated activation of AKT signaling. This chain is Cyclic AMP-responsive element-binding protein 1 (Creb1), found in Rattus norvegicus (Rat).